The primary structure comprises 101 residues: Small ribosomal subunit protein uS14 (101 aa).

The disordered stretch occupies residues 1–20 (MAKTSQVNRNKRREKMAARD).

Belongs to the universal ribosomal protein uS14 family. In terms of assembly, part of the 30S ribosomal subunit. Contacts proteins S3 and S10.

Functionally, binds 16S rRNA, required for the assembly of 30S particles and may also be responsible for determining the conformation of the 16S rRNA at the A site. This Acidiphilium cryptum (strain JF-5) protein is Small ribosomal subunit protein uS14.